Reading from the N-terminus, the 524-residue chain is Protein hunchback (524 aa).

Disordered stretches follow at residues 42-86 and 101-187; these read IVKR…PQTQ and YNHN…DEQS. The segment covering 59–75 has biased composition (low complexity); the sequence is SGSDFHSSSPSSDTSQD. The span at 76–86 shows a compositional bias: polar residues; the sequence is LQHSYQSPQTQ. Composition is skewed to basic and acidic residues over residues 118–127, 138–154, and 164–178; these read KSEKEEKDME, RKPD…EMSL, and TSEH…KSDN. C2H2-type zinc fingers lie at residues 202–224, 231–253, 259–281, and 298–311; these read FKCK…SKVH, LTCP…LRNH, FQCN…MKSH, and YCHS…RYGH. The segment at 402-442 is disordered; that stretch reads DLSKPGCSYTGEQKSRRKGPAFKVDPTQVESEEEDEETSTT. C2H2-type zinc fingers lie at residues 471–493 and 499–523; these read NSCQ…MGYH and FTCN…RVSH.

The protein belongs to the hunchback C2H2-type zinc-finger protein family.

It localises to the nucleus. Its function is as follows. Gap class segmentation protein that controls development of head structures. The sequence is that of Protein hunchback (hb) from Tribolium castaneum (Red flour beetle).